A 190-amino-acid polypeptide reads, in one-letter code: Protein GrpE (190 aa).

Residues 21–49 (DDLQEEVEATETEETVEEVIEETPEKSEL) form a disordered region. Over residues 23–42 (LQEEVEATETEETVEEVIEE) the composition is skewed to acidic residues.

The protein belongs to the GrpE family. Homodimer.

The protein localises to the cytoplasm. Its function is as follows. Participates actively in the response to hyperosmotic and heat shock by preventing the aggregation of stress-denatured proteins, in association with DnaK and GrpE. It is the nucleotide exchange factor for DnaK and may function as a thermosensor. Unfolded proteins bind initially to DnaJ; upon interaction with the DnaJ-bound protein, DnaK hydrolyzes its bound ATP, resulting in the formation of a stable complex. GrpE releases ADP from DnaK; ATP binding to DnaK triggers the release of the substrate protein, thus completing the reaction cycle. Several rounds of ATP-dependent interactions between DnaJ, DnaK and GrpE are required for fully efficient folding. This Streptococcus pyogenes serotype M3 (strain SSI-1) protein is Protein GrpE.